A 208-amino-acid chain; its full sequence is MKVKICGVTHPDDAWEAAKAGADYVGMIFAKDSQRCVTKETAKCIVEAIRDGGSEPVGVFSEHSIGEIIAISSATGITSIQLSGRNIDFKFSQLRELFSIFYVVSVYSNGQPSAAIPPMSNTVTVIYDHIGGERGTPFDWRAFSPFQHDNWMLGGGVNPGNVGEAVRLLSPRGIDVSSGVERPGVLRKDVTLMQALIDSAKGVGNLTS.

It belongs to the TrpF family.

The catalysed reaction is N-(5-phospho-beta-D-ribosyl)anthranilate = 1-(2-carboxyphenylamino)-1-deoxy-D-ribulose 5-phosphate. It participates in amino-acid biosynthesis; L-tryptophan biosynthesis; L-tryptophan from chorismate: step 3/5. The chain is N-(5'-phosphoribosyl)anthranilate isomerase (trpF) from Chlamydia muridarum (strain MoPn / Nigg).